We begin with the raw amino-acid sequence, 284 residues long: RNase adapter protein RapZ (284 aa).

8–15 contributes to the ATP binding site; that stretch reads GRSGSGKS. 56-59 serves as a coordination point for GTP; sequence DVRN. Residues 266–284 form an RNA-binding region; sequence RSRGKNVQSRHRTLEKRKT.

The protein belongs to the RapZ-like family. RapZ subfamily. Homotrimer.

Functionally, modulates the synthesis of GlmS, by affecting the processing and stability of the regulatory small RNA GlmZ. When glucosamine-6-phosphate (GlcN6P) concentrations are high in the cell, RapZ binds GlmZ and targets it to cleavage by RNase E. Consequently, GlmZ is inactivated and unable to activate GlmS synthesis. Under low GlcN6P concentrations, RapZ is sequestered and inactivated by an other regulatory small RNA, GlmY, preventing GlmZ degradation and leading to synthesis of GlmS. The sequence is that of RNase adapter protein RapZ from Salmonella arizonae (strain ATCC BAA-731 / CDC346-86 / RSK2980).